We begin with the raw amino-acid sequence, 369 residues long: Phenylalanine--tRNA ligase alpha subunit (369 aa).

A Mg(2+)-binding site is contributed by Glu-272.

This sequence belongs to the class-II aminoacyl-tRNA synthetase family. Phe-tRNA synthetase alpha subunit type 1 subfamily. Tetramer of two alpha and two beta subunits. Mg(2+) serves as cofactor.

It is found in the cytoplasm. The catalysed reaction is tRNA(Phe) + L-phenylalanine + ATP = L-phenylalanyl-tRNA(Phe) + AMP + diphosphate + H(+). In Cutibacterium acnes (strain DSM 16379 / KPA171202) (Propionibacterium acnes), this protein is Phenylalanine--tRNA ligase alpha subunit.